Reading from the N-terminus, the 396-residue chain is General transcription factor IIH subunit 2 (396 aa).

Positions 60 to 236 constitute a VWFA domain; sequence HLYVVVDGSR…HYKELLARHV (177 aa). Residue Tyr-95 is modified to Phosphotyrosine. The C4-type zinc-finger motif lies at 292–309; that stretch reads CPQCRAKYCELPVECKIC.

Belongs to the GTF2H2 family. As to quaternary structure, component of the TFIID-containing RNA polymerase II pre-initiation complex that is composed of TBP and at least GTF2A1, GTF2A2, GTF2E1, GTF2E2, GTF2F1, GTF2H2, GTF2H3, GTF2H4, GTF2H5, GTF2B, TCEA1, ERCC2 and ERCC3. Component of the 7-subunit TFIIH core complex composed of XPB/ERCC3, XPD/ERCC2, GTF2H1, GTF2H2, GTF2H3, GTF2H4 and GTF2H5, which is active in NER. The core complex associates with the 3-subunit CDK-activating kinase (CAK) module composed of CCNH/cyclin H, CDK7 and MNAT1 to form the 10-subunit holoenzyme (holo-TFIIH) active in transcription. Interacts with XPB, XPD, GTF2H1 and GTF2H3.

The protein localises to the nucleus. In terms of biological role, component of the general transcription and DNA repair factor IIH (TFIIH) core complex, which is involved in general and transcription-coupled nucleotide excision repair (NER) of damaged DNA and, when complexed to CAK, in RNA transcription by RNA polymerase II. In NER, TFIIH acts by opening DNA around the lesion to allow the excision of the damaged oligonucleotide and its replacement by a new DNA fragment. In transcription, TFIIH has an essential role in transcription initiation. When the pre-initiation complex (PIC) has been established, TFIIH is required for promoter opening and promoter escape. Phosphorylation of the C-terminal tail (CTD) of the largest subunit of RNA polymerase II by the kinase module CAK controls the initiation of transcription. The N-terminus of GTF2H2 interacts with and regulates XPD whereas an intact C-terminus is required for a successful escape of RNAP II form the promoter. In Rattus norvegicus (Rat), this protein is General transcription factor IIH subunit 2 (Gtf2h2).